The primary structure comprises 362 residues: Chorismate synthase (362 aa).

Position 46 (arginine 46) interacts with NADP(+). FMN-binding positions include 122-124, 238-239, glycine 278, 293-297, and arginine 319; these read RSS, NA, and KPTPS.

It belongs to the chorismate synthase family. In terms of assembly, homotetramer. FMNH2 is required as a cofactor.

It catalyses the reaction 5-O-(1-carboxyvinyl)-3-phosphoshikimate = chorismate + phosphate. The protein operates within metabolic intermediate biosynthesis; chorismate biosynthesis; chorismate from D-erythrose 4-phosphate and phosphoenolpyruvate: step 7/7. Functionally, catalyzes the anti-1,4-elimination of the C-3 phosphate and the C-6 proR hydrogen from 5-enolpyruvylshikimate-3-phosphate (EPSP) to yield chorismate, which is the branch point compound that serves as the starting substrate for the three terminal pathways of aromatic amino acid biosynthesis. This reaction introduces a second double bond into the aromatic ring system. The polypeptide is Chorismate synthase (Campylobacter jejuni subsp. jejuni serotype O:23/36 (strain 81-176)).